The chain runs to 1265 residues: Protein diaphanous homolog 1 (1265 aa).

Met-1 is modified (N-acetylmethionine). Positions 1 to 12 are enriched in gly residues; the sequence is MEPSGGGLGPGR. Disordered stretches follow at residues 1 to 42 and 54 to 83; these read MEPS…FTLK and SMRIKKEKEKPNSAHRNSSASYGDDPTAQS. The residue at position 22 (Ser-22) is a Phosphoserine. A compositionally biased stretch (basic and acidic residues) spans 54 to 65; it reads SMRIKKEKEKPN. Residues 67–83 show a composition bias toward polar residues; the sequence is AHRNSSASYGDDPTAQS. Positions 84 to 449 constitute a GBD/FH3 domain; that stretch reads LQDISDDQVL…QIVLHKNGTD (366 aa). A coiled-coil region spans residues 474-568; it reads VEKSEAKATE…KKEMASLSAV (95 aa). The tract at residues 573-742 is disordered; the sequence is SVSSSAAVPQ…PPPPGMGVPP (170 aa). Pro residues-rich tracts occupy residues 594–628 and 645–742; these read IPPPPPPPLPGGAVPPPPPPPLPAGTGIPPPPPLP and IPPP…GVPP. Positions 625 to 757 constitute an FH1 domain; the sequence is PPLPGGACIS…FGIPAAPVLP (133 aa). Thr-761 carries the phosphothreonine modification. The FH2 domain maps to 762-1164; it reads PKKVYKPEVQ…MRRAKLAKEK (403 aa). 2 positions are modified to N6-acetyllysine: Lys-1050 and Lys-1096. Tyr-1114 carries the phosphotyrosine modification. Residues 1141-1185 adopt a coiled-coil conformation; sequence AVKENQKRRETEEKMRRAKLAKEKAEKERLEKQQKREQLIDMNAE. The 29-residue stretch at 1187 to 1215 folds into the DAD domain; it reads DETGVMDSLLEALQSGAAFRRKRGPRQVN. Ser-1247 is modified (phosphoserine).

It belongs to the formin homology family. Diaphanous subfamily. In terms of assembly, homodimer. Interacts with the GTP-bound form of RHOA. Interacts with RHOC, PFY1, MAPRE1, BAIAP2 and APC. Interacts with SCAI. Interacts with DCAF7, via FH2 domain. Interacts with NCDN. Interacts with OSBPL10, OSBPL2, VIM, TUBB and DYN1. Post-translationally, phosphorylation at Thr-761 is stimulated by cAMP and regulates stability, complex formation and mitochondrial movement. As to expression, expressed in testis. Present in Sertoli cells (at protein level).

The protein localises to the cell membrane. The protein resides in the cell projection. It localises to the ruffle membrane. Its subcellular location is the cytoplasm. It is found in the cytoskeleton. The protein localises to the microtubule organizing center. The protein resides in the centrosome. It localises to the spindle. Its subcellular location is the nucleus. Functionally, actin nucleation and elongation factor required for the assembly of F-actin structures, such as actin cables and stress fibers. Binds to the barbed end of the actin filament and slows down actin polymerization and depolymerization. Required for cytokinesis, and transcriptional activation of the serum response factor. DFR proteins couple Rho and Src tyrosine kinase during signaling and the regulation of actin dynamics. Functions as a scaffold protein for MAPRE1 and APC to stabilize microtubules and promote cell migration. Has neurite outgrowth promoting activity. Acts in a Rho-dependent manner to recruit PFY1 to the membrane. The MEMO1-RHOA-DIAPH1 signaling pathway plays an important role in ERBB2-dependent stabilization of microtubules at the cell cortex. It controls the localization of APC and CLASP2 to the cell membrane, via the regulation of GSK3B activity. In turn, membrane-bound APC allows the localization of the MACF1 to the cell membrane, which is required for microtubule capture and stabilization. Plays a role in the regulation of cell morphology and cytoskeletal organization. Required in the control of cell shape. Also acts as an actin nucleation and elongation factor in the nucleus by promoting nuclear actin polymerization inside the nucleus to drive serum-dependent SRF-MRTFA activity. This chain is Protein diaphanous homolog 1, found in Rattus norvegicus (Rat).